The chain runs to 420 residues: Gamma-glutamyl phosphate reductase (420 aa).

Belongs to the gamma-glutamyl phosphate reductase family.

Its subcellular location is the cytoplasm. It carries out the reaction L-glutamate 5-semialdehyde + phosphate + NADP(+) = L-glutamyl 5-phosphate + NADPH + H(+). Its pathway is amino-acid biosynthesis; L-proline biosynthesis; L-glutamate 5-semialdehyde from L-glutamate: step 2/2. Functionally, catalyzes the NADPH-dependent reduction of L-glutamate 5-phosphate into L-glutamate 5-semialdehyde and phosphate. The product spontaneously undergoes cyclization to form 1-pyrroline-5-carboxylate. This chain is Gamma-glutamyl phosphate reductase, found in Streptococcus pneumoniae (strain ATCC 700669 / Spain 23F-1).